The primary structure comprises 466 residues: Purple acid phosphatase 25 (466 aa).

The first 21 residues, 1–21, serve as a signal peptide directing secretion; the sequence is MRMNKILLVFVFLSIATVINS. Position 164 (D164) interacts with Fe cation. Residue N172 is glycosylated (N-linked (GlcNAc...) asparagine). Fe cation-binding residues include D192 and Y195. D192 lines the Zn(2+) pocket. Zn(2+) contacts are provided by N229 and H314. N229 is a substrate binding site. Residue H324 is the Proton donor of the active site. Residue H351 participates in Zn(2+) binding. 351–353 is a binding site for substrate; it reads HVH. H353 serves as a coordination point for Fe cation. 2 N-linked (GlcNAc...) asparagine glycosylation sites follow: N367 and N424.

Belongs to the metallophosphoesterase superfamily. Purple acid phosphatase family. In terms of assembly, homodimer. Fe cation serves as cofactor. It depends on Zn(2+) as a cofactor. In terms of tissue distribution, specifically expressed in flowers.

The protein localises to the secreted. The catalysed reaction is a phosphate monoester + H2O = an alcohol + phosphate. The protein is Purple acid phosphatase 25 (PAP25) of Arabidopsis thaliana (Mouse-ear cress).